The chain runs to 421 residues: General transcription factor IIH subunit 2 (421 aa).

The tract at residues 1–26 is disordered; it reads MSNQRKRSNDEREEEDDEDAEGIGEW. Residues 11-24 are compositionally biased toward acidic residues; the sequence is EREEEDDEDAEGIG. Positions 83–272 constitute a VWFA domain; the sequence is YLYIVIDFSR…IAEFAIANLI (190 aa). The segment at 362–408 adopts an RING-type zinc-finger fold; the sequence is CFGCQQSLIGAGNKPVPCVTCRKCKHYFCLDCDIYIHESLHNCPGCE.

This sequence belongs to the GTF2H2 family. As to quaternary structure, component of the 7-subunit TFIIH core complex composed of XPB, XPD, TFB1/GTF2H1, GTF2H2/P44, TFB4/GTF2H3, TFB2/GTF2H4 and TFB5/GTF2H5, which is active in NER. The core complex associates with the 3-subunit CDK-activating kinase (CAK) module composed of CYCH1/cyclin H1, CDKD and MAT1/At4g30820 to form the 10-subunit holoenzyme (holo-TFIIH) active in transcription. Interacts with XPD.

The protein resides in the nucleus. Functionally, component of the general transcription and DNA repair factor IIH (TFIIH) core complex, which is involved in general and transcription-coupled nucleotide excision repair (NER) of damaged DNA and, when complexed to CAK, in RNA transcription by RNA polymerase II. In NER, TFIIH acts by opening DNA around the lesion to allow the excision of the damaged oligonucleotide and its replacement by a new DNA fragment. In transcription, TFIIH has an essential role in transcription initiation. When the pre-initiation complex (PIC) has been established, TFIIH is required for promoter opening and promoter escape. Phosphorylation of the C-terminal tail (CTD) of the largest subunit of RNA polymerase II by the kinase module CAK controls the initiation of transcription. Can restore UV resistance in the NER-deficient ssl1-1 yeast mutant. This Arabidopsis thaliana (Mouse-ear cress) protein is General transcription factor IIH subunit 2.